The primary structure comprises 366 residues: Chorismate synthase (366 aa).

2 residues coordinate NADP(+): arginine 48 and arginine 54. FMN is bound by residues 125-127, 241-242, glycine 285, 300-304, and arginine 326; these read RSS, NA, and KPTSS.

This sequence belongs to the chorismate synthase family. As to quaternary structure, homotetramer. The cofactor is FMNH2.

It catalyses the reaction 5-O-(1-carboxyvinyl)-3-phosphoshikimate = chorismate + phosphate. It functions in the pathway metabolic intermediate biosynthesis; chorismate biosynthesis; chorismate from D-erythrose 4-phosphate and phosphoenolpyruvate: step 7/7. Its function is as follows. Catalyzes the anti-1,4-elimination of the C-3 phosphate and the C-6 proR hydrogen from 5-enolpyruvylshikimate-3-phosphate (EPSP) to yield chorismate, which is the branch point compound that serves as the starting substrate for the three terminal pathways of aromatic amino acid biosynthesis. This reaction introduces a second double bond into the aromatic ring system. The sequence is that of Chorismate synthase from Cereibacter sphaeroides (strain ATCC 17029 / ATH 2.4.9) (Rhodobacter sphaeroides).